The following is a 243-amino-acid chain: 6-carboxyhexanoate--CoA ligase (243 aa).

The protein belongs to the BioW family. As to quaternary structure, homodimer. Mg(2+) is required as a cofactor.

The enzyme catalyses heptanedioate + ATP + CoA = 6-carboxyhexanoyl-CoA + AMP + diphosphate. The protein operates within metabolic intermediate metabolism; pimeloyl-CoA biosynthesis; pimeloyl-CoA from pimelate: step 1/1. Its function is as follows. Catalyzes the transformation of pimelate into pimeloyl-CoA with concomitant hydrolysis of ATP to AMP. This chain is 6-carboxyhexanoate--CoA ligase, found in Corynebacterium pseudotuberculosis (strain FRC41).